Here is a 141-residue protein sequence, read N- to C-terminus: Drosulfakinins (141 aa).

A signal peptide spans 1 to 31; it reads MGLRSCTHLATLFMTLWAVAFCFLVVVPIPA. Residues 32–73 constitute a propeptide that is removed on maturation; sequence QTTSLQNAKDDRRLQELESKIGAESDQTNANLVGPSFSRFGD. Phe82 bears the Phenylalanine amide mark. Residues 86-111 constitute a propeptide that is removed on maturation; it reads VPLISRPMIPIELDLLMDNDDERTKA. Position 117 is a sulfotyrosine (Tyr117). Phe122 is subject to Phenylalanine amide. Tyr134 is modified (sulfotyrosine). Phe139 carries the phenylalanine amide modification.

The protein belongs to the gastrin/cholecystokinin family.

The protein resides in the secreted. In terms of biological role, drosulfakinin-0 (DSK 0) plays diverse biological roles including regulating gut muscle contraction in adults but not in larvae. The chain is Drosulfakinins from Drosophila simulans (Fruit fly).